Consider the following 315-residue polypeptide: Protein rlx (315 aa).

Residues 263 to 315 are disordered; sequence TEQLKQRRVERAQETKQAHSKISSRDTRESENQRERAKGNNIRIERGDEGLSR.

This protein is probably required for relaxation complex formation and plasmid mobilization by conjugative plasmids. In Staphylococcus aureus, this protein is Protein rlx (rlx).